We begin with the raw amino-acid sequence, 179 residues long: Acireductone dioxygenase (179 aa).

Residues 1-12 (MVEAWYMDDSEE) show a composition bias toward acidic residues. A disordered region spans residues 1–21 (MVEAWYMDDSEEDQRRPHRLE). Fe(2+) contacts are provided by His88, His90, Glu94, and His133. 4 residues coordinate Ni(2+): His88, His90, Glu94, and His133.

It belongs to the acireductone dioxygenase (ARD) family. Monomer. Interacts with MMP14. Fe(2+) is required as a cofactor. Ni(2+) serves as cofactor.

The protein localises to the cytoplasm. Its subcellular location is the nucleus. It is found in the cell membrane. The catalysed reaction is 1,2-dihydroxy-5-(methylsulfanyl)pent-1-en-3-one + O2 = 4-methylsulfanyl-2-oxobutanoate + formate + 2 H(+). It carries out the reaction 1,2-dihydroxy-5-(methylsulfanyl)pent-1-en-3-one + O2 = 3-(methylsulfanyl)propanoate + CO + formate + 2 H(+). It functions in the pathway amino-acid biosynthesis; L-methionine biosynthesis via salvage pathway; L-methionine from S-methyl-5-thio-alpha-D-ribose 1-phosphate: step 5/6. Its function is as follows. Catalyzes 2 different reactions between oxygen and the acireductone 1,2-dihydroxy-3-keto-5-methylthiopentene (DHK-MTPene) depending upon the metal bound in the active site. Fe-containing acireductone dioxygenase (Fe-ARD) produces formate and 2-keto-4-methylthiobutyrate (KMTB), the alpha-ketoacid precursor of methionine in the methionine recycle pathway. Ni-containing acireductone dioxygenase (Ni-ARD) produces methylthiopropionate, carbon monoxide and formate, and does not lie on the methionine recycle pathway. Also down-regulates cell migration mediated by MMP14. This Monodelphis domestica (Gray short-tailed opossum) protein is Acireductone dioxygenase.